The primary structure comprises 66 residues: MPKQKTHRASAKRFKRTGSGGLKRFRAFTSHRFHGKTKKQRRHLRKASMVSSGDFKRIKAMLTGLK.

Residues 1 to 16 (MPKQKTHRASAKRFKR) are compositionally biased toward basic residues. The tract at residues 1 to 20 (MPKQKTHRASAKRFKRTGSG) is disordered.

This sequence belongs to the bacterial ribosomal protein bL35 family.

The polypeptide is Large ribosomal subunit protein bL35 (Streptococcus uberis (strain ATCC BAA-854 / 0140J)).